Here is a 349-residue protein sequence, read N- to C-terminus: MALVPTPAVNEGPLFAEVDMGDNSSTPTVRATVVQASTIFYDTPATLVKAERLLAEAASYGAQLVVFPEAFIGGYPRGSTFGVSIGNRTAKGKEEFRKYHASAIDVPGPEVDRLAAMAGKYKVYLVMGVIERDGYTLYCTVLFFDSQGHFLGKHRKIMPTALERIIWGFGDGSTIPVYDTPLGKIGAAICWENRMPLLRTAMYAKGIEIYCAPTADSRDVWQASMTHIALEGGCFVLSANQFCRRKDYPPPPEYVFSGTEEDLTPDSIVCAGGSVIISPSGAVLAGPNYVGEALISADLDLGEIARAKFDFDVVGHYARPEVLSLIVRDHAVSPVSFTSTSSKAESSPK.

Residues 29-301 enclose the CN hydrolase domain; that stretch reads VRATVVQAST…EALISADLDL (273 aa). Residue E69 is the Proton acceptor of the active site. Residue K156 is the Proton donor of the active site. The active-site Nucleophile is C190.

This sequence belongs to the carbon-nitrogen hydrolase superfamily. Nitrilase family. In terms of tissue distribution, expressed in roots, stems, cotyledons, leaves and flowers.

Its subcellular location is the cell membrane. The enzyme catalyses a nitrile + 2 H2O = a carboxylate + NH4(+). It carries out the reaction 3-cyano-L-alanine + 2 H2O = L-aspartate + NH4(+). It catalyses the reaction L-asparagine = 3-cyano-L-alanine + H2O. In terms of biological role, highly specific for beta-cyano-L-alanine (Ala(CN)). Low activity with 3-phenylpropionitrile (PPN). Not associated with auxin production but may be involved in cyanide detoxification. This chain is Bifunctional nitrilase/nitrile hydratase NIT4A (NIT4A), found in Nicotiana tabacum (Common tobacco).